A 340-amino-acid chain; its full sequence is 2-deoxy-scyllo-inosamine dehydrogenase (340 aa).

Zn(2+) contacts are provided by Cys-37, His-59, Cys-89, Cys-92, Cys-95, Cys-103, and Glu-144.

The protein belongs to the zinc-containing alcohol dehydrogenase family. DOIA dehydrogenase subfamily. Zn(2+) is required as a cofactor.

It catalyses the reaction 2-deoxy-scyllo-inosamine + NADP(+) = 3-amino-2,3-dideoxy-scyllo-inosose + NADPH + H(+). The catalysed reaction is 2-deoxy-scyllo-inosamine + NAD(+) = 3-amino-2,3-dideoxy-scyllo-inosose + NADH + H(+). It participates in metabolic intermediate biosynthesis; 2-deoxystreptamine biosynthesis; 2-deoxystreptamine from D-glucose 6-phosphate: step 3/4. The protein operates within antibiotic biosynthesis; neomycin biosynthesis. Catalyzes the oxidation of 2-deoxy-scyllo-inosamine (DOIA) with NAD(+) or NADP(+), forming 3-amino-2,3-dideoxy-scyllo-inosose (amino-DOI). This is 2-deoxy-scyllo-inosamine dehydrogenase (neoA) from Streptomyces fradiae (Streptomyces roseoflavus).